The following is a 1026-amino-acid chain: Contactin-4 (1026 aa).

Residues 1–18 (MRLPWELLVLQSFMLCLA) form the signal peptide. Ig-like C2-type domains are found at residues 32–117 (PSHV…AKLQ), 122–206 (ENFK…HQVL), 225–311 (PKIE…GQVT), 316–400 (PNWV…AELS), 406–493 (PDFS…GNVV), and 497–586 (PTKV…DKLS). Intrachain disulfides connect Cys-50–Cys-100, Cys-144–Cys-194, Cys-247–Cys-295, Cys-337–Cys-384, Cys-429–Cys-477, and Cys-519–Cys-576. N-linked (GlcNAc...) asparagine glycosylation is found at Asn-65, Asn-90, and Asn-191. Residues Asn-370, Asn-375, and Asn-466 are each glycosylated (N-linked (GlcNAc...) asparagine). Fibronectin type-III domains are found at residues 599–697 (PPEA…TEEA), 702–799 (TPAN…SAEE), 804–899 (PPAS…TRKP), and 900–995 (PPSQ…ISNS). The disordered stretch occupies residues 685–710 (PSRPSEKRRTEEALPEVTPANVSGGG). Over residues 687 to 696 (RPSEKRRTEE) the composition is skewed to basic and acidic residues. 7 N-linked (GlcNAc...) asparagine glycosylation sites follow: Asn-705, Asn-764, Asn-858, Asn-893, Asn-911, Asn-929, and Asn-954. The GPI-anchor amidated serine moiety is linked to residue Ser-1000. The propeptide at 1001–1026 (GASTSNACTLSAISTIMISLTARSSL) is removed in mature form.

The protein belongs to the immunoglobulin superfamily. Contactin family. Interacts with PTPRG. In terms of tissue distribution, specifically expressed in the nervous system. Not expressed in heart, spleen, lung, liver, kidney or skeletal muscle. In the hippocampus, it is highly expressed in CA1 pyramidal cells and weakly expressed in other regions of the hippocampus.

It localises to the cell membrane. It is found in the secreted. Functionally, contactins mediate cell surface interactions during nervous system development. Has some neurite outgrowth-promoting activity. May be involved in synaptogenesis. The sequence is that of Contactin-4 (Cntn4) from Rattus norvegicus (Rat).